The chain runs to 419 residues: Multifunctional CCA protein (419 aa).

ATP-binding residues include Gly8 and Arg11. Positions 8 and 11 each coordinate CTP. Mg(2+) contacts are provided by Asp21 and Asp23. Residues Arg91, Arg141, and Arg144 each coordinate ATP. Positions 91, 141, and 144 each coordinate CTP. The HD domain occupies 230-331 (TGVHVMMVLD…VRLLERCDAL (102 aa)).

Belongs to the tRNA nucleotidyltransferase/poly(A) polymerase family. Bacterial CCA-adding enzyme type 1 subfamily. As to quaternary structure, monomer. Can also form homodimers and oligomers. Mg(2+) serves as cofactor. Requires Ni(2+) as cofactor.

The catalysed reaction is a tRNA precursor + 2 CTP + ATP = a tRNA with a 3' CCA end + 3 diphosphate. It catalyses the reaction a tRNA with a 3' CCA end + 2 CTP + ATP = a tRNA with a 3' CCACCA end + 3 diphosphate. Its function is as follows. Catalyzes the addition and repair of the essential 3'-terminal CCA sequence in tRNAs without using a nucleic acid template. Adds these three nucleotides in the order of C, C, and A to the tRNA nucleotide-73, using CTP and ATP as substrates and producing inorganic pyrophosphate. tRNA 3'-terminal CCA addition is required both for tRNA processing and repair. Also involved in tRNA surveillance by mediating tandem CCA addition to generate a CCACCA at the 3' terminus of unstable tRNAs. While stable tRNAs receive only 3'-terminal CCA, unstable tRNAs are marked with CCACCA and rapidly degraded. This Paracidovorax citrulli (strain AAC00-1) (Acidovorax citrulli) protein is Multifunctional CCA protein.